The chain runs to 217 residues: Thymidylate kinase (217 aa).

7-14 provides a ligand contact to ATP; it reads GIEGAGKS.

Belongs to the thymidylate kinase family.

The catalysed reaction is dTMP + ATP = dTDP + ADP. Functionally, phosphorylation of dTMP to form dTDP in both de novo and salvage pathways of dTTP synthesis. This is Thymidylate kinase from Desulfovibrio desulfuricans (strain ATCC 27774 / DSM 6949 / MB).